A 483-amino-acid chain; its full sequence is Salicylaldehyde dehydrogenase (483 aa).

An NAD(+)-binding site is contributed by 228–233; sequence GSTRVG. Active-site residues include glutamate 250 and cysteine 284.

This sequence belongs to the aldehyde dehydrogenase family.

It carries out the reaction salicylaldehyde + NAD(+) + H2O = salicylate + NADH + 2 H(+). Its pathway is aromatic compound metabolism; naphthalene degradation. This is Salicylaldehyde dehydrogenase (nahF) from Pseudomonas putida (Arthrobacter siderocapsulatus).